The sequence spans 255 residues: Protein BEAN1 (255 aa).

A helical transmembrane segment spans residues Val-37–Val-57. A compositionally biased stretch (basic residues) spans Gln-69–Arg-90. Disordered regions lie at residues Gln-69–Ala-109 and Asp-160–Val-255. Residues Gln-193–Met-206 show a composition bias toward polar residues. Positions Gly-217–Pro-226 are enriched in low complexity. Over residues Pro-234–Pro-243 the composition is skewed to polar residues. The span at Thr-244–Val-255 shows a compositional bias: pro residues.

In terms of assembly, interacts with NEDD4.

Its subcellular location is the membrane. This Mus musculus (Mouse) protein is Protein BEAN1 (Bean1).